The primary structure comprises 6298 residues: Adhesion G-protein coupled receptor V1 (6298 aa).

The first 28 residues, 1-28 (MSVTSEPGMISSFLLVYLSTLFISFVFG), serve as a signal peptide directing secretion. Calx-beta domains lie at 29–116 (EAEI…FHLT), 132–236 (ASVT…IQLR), 251–362 (VEII…IMLL), 389–489 (YGVL…LTIL), 646–746 (PAIA…TLSL), 764–862 (DLII…VILS), 877–980 (VNIT…IILL), 994–1094 (ASLR…IVLF), 1108–1208 (ATVI…LRLV), 1440–1540 (AMPR…FLLK), 1562–1662 (QKSD…VTLV), 1706–1805 (TGLP…VELL), 1846–1948 (ILVT…VSIL), 1962–2075 (TLTI…IELF), 2103–2202 (HLVI…VQLL), 2218–2320 (VITI…VQLA), 2437–2537 (TLCL…FLIS), 2576–2672 (FIIY…VRLG), 2687–2786 (VTVN…VVLY), 2810–2921 (LTVE…VNLT), 2945–3044 (QIVI…LLLT), and 3067–3167 (DGPG…VCTL). Topologically, residues 29 to 5901 (EAEIRFTGQT…TDNSSSYNEA (5873 aa)) are extracellular. 6 EAR repeats span residues 3251–3292 (VFSI…RWQG), 3293–3341 (TFVP…MLTA), 3344–3389 (RLVL…RWNG), 3391–3435 (NFAW…TWSG), 3437–3484 (QFIN…VWEM), and 3488–3530 (SLRY…CWNS). 13 consecutive Calx-beta domains span residues 3581–3622 (QSDF…RVQL), 3636–3736 (SVRV…VVTL), 3772–3872 (GAVR…VTIA), 3919–4003 (GGVI…ISLV), 4017–4120 (VNVV…IELT), 4135–4235 (SVII…EFQL), 4251–4351 (ARIT…LAIT), 4384–4484 (RIII…ILLI), 4507–4607 (SPFG…IVQL), 4628–4728 (KFGD…AVQL), 4989–5089 (TTAE…INLT), 5281–5325 (AVEE…YVFL), and 5361–5461 (IGFS…FVEL). One can recognise a GAIN-B domain in the interval 5740-5896 (SILALHWNPQ…AVYAQTDNSS (157 aa)). Cystine bridges form between Cys-5849–Cys-5878 and Cys-5866–Cys-5880. The GPS stretch occupies residues 5849 to 5896 (CLLWNQAAASWLSDSQFCKVVEDASDYVECACSHMSVYAVYAQTDNSS). Residues 5902–5922 (FFSAGLICISGLCLAVVSHMF) form a helical membrane-spanning segment. Over 5923–5932 (CARHSMFAAK) the chain is Cytoplasmic. Residues 5933–5953 (LLTHMMVASLGTQILFLASAY) traverse the membrane as a helical segment. Topologically, residues 5954-5973 (ASPHLSEESCSAVAAVAHYL) are extracellular. A helical transmembrane segment spans residues 5974–5994 (YLCQFSWMLIQSVNFWYVLVV). At 5995–6003 (SDEHTERRC) the chain is on the cytoplasmic side. The helical transmembrane segment at 6004–6024 (LLFCLLSWGLPSFVVILLILI) threads the bilayer. The Extracellular segment spans residues 6025–6052 (LRGIYHRSMPQIYGLIHGDLCFIPNIYA). The helical transmembrane segment at 6053-6073 (ALFTAALVPLMCLVVVFVVFI) threads the bilayer. The Cytoplasmic portion of the chain corresponds to 6074–6097 (HAYQLKPQWKGYDDVFRGRTNAAE). Residues 6098 to 6118 (IPLILYLFALISMTWLWGGLH) form a helical membrane-spanning segment. Residues 6119–6126 (MAYGHFWM) are Extracellular-facing. Residues 6127-6147 (LVLFVIFNSLQGLYVFVVYFI) traverse the membrane as a helical segment. The Cytoplasmic segment spans residues 6148-6298 (LHNQTCCPMK…RRIPIADTHL (151 aa)). 2 disordered regions span residues 6206–6242 (ERSSFQQTSQASPDLKTSPQNGASFPSSGGYGPGSLI) and 6264–6283 (SVSDNESGQGSQEGGTLTDS). Composition is skewed to polar residues over residues 6208 to 6226 (SSFQQTSQASPDLKTSPQN) and 6265 to 6283 (VSDNESGQGSQEGGTLTDS).

Belongs to the G-protein coupled receptor 2 family. Adhesion G-protein coupled receptor (ADGR) subfamily. In terms of assembly, forms a heterodimer, consisting of a large extracellular region (alpha subunit) non-covalently linked to a seven-transmembrane moiety (beta subunit). Interacts (via the cytoplasmic region) with PDZD7. Component of USH2 complex, composed of ADGRV1, PDZD7, USH2A and WHRN. Interacts with USH2A and WHRN. Interacts (via the cytoplasmic region) with MYO7A (via MyTH4-FERM domains). Autoproteolytically cleaved into 2 subunits, an extracellular alpha subunit and a seven-transmembrane subunit. As to expression, expressed by oligodendrocytes. In midbrain, enriched in the myelinated regions of the superior and inferior colliculi. In the cochlea, expressed in developing hair cells. Expressed by photoreceptors in the retina.

It localises to the cell membrane. The protein localises to the cell projection. Its subcellular location is the stereocilium membrane. The protein resides in the photoreceptor inner segment. It is found in the secreted. Functionally, G-protein coupled receptor which has an essential role in the development of hearing and vision. Couples to G-alpha(i)-proteins, GNAI1/2/3, G-alpha(q)-proteins, GNAQ, as well as G-alpha(s)-proteins, GNAS, inhibiting adenylate cyclase (AC) activity and cAMP production. Required for the hair bundle ankle formation, which connects growing stereocilia in developing cochlear hair cells of the inner ear. In response to extracellular calcium, activates kinases PKA and PKC to regulate myelination by inhibiting the ubiquitination of MAG, thus enhancing the stability of this protein in myelin-forming cells of the auditory pathway. In retina photoreceptors, the USH2 complex is required for the maintenance of periciliary membrane complex that seems to play a role in regulating intracellular protein transport. Involved in the regulation of bone metabolism. Its function is as follows. Cleaved ADGRV1 beta-subunit couples with G-alpha(i)-proteins, GNAI1/2/3, and constitutively inhibits adenylate cyclase (AC) activity with a stronger effect than full ADGRV1. This chain is Adhesion G-protein coupled receptor V1, found in Mus musculus (Mouse).